A 310-amino-acid chain; its full sequence is 2-dehydropantoate 2-reductase (310 aa).

NADP(+) contacts are provided by residues 9–14 (GVGAIG) and Asn-100. Residue Asn-100 participates in substrate binding. Lys-184 (proton donor) is an active-site residue. 3 residues coordinate substrate: Asn-188, Asn-192, and Ser-259. Glu-270 lines the NADP(+) pocket.

Belongs to the ketopantoate reductase family.

It localises to the cytoplasm. The enzyme catalyses (R)-pantoate + NADP(+) = 2-dehydropantoate + NADPH + H(+). It participates in cofactor biosynthesis; (R)-pantothenate biosynthesis; (R)-pantoate from 3-methyl-2-oxobutanoate: step 2/2. Functionally, catalyzes the NADPH-dependent reduction of ketopantoate into pantoic acid. The chain is 2-dehydropantoate 2-reductase from Aquifex aeolicus (strain VF5).